Here is a 358-residue protein sequence, read N- to C-terminus: Sulfoquinovosyl glycerol transport ATP-binding protein SmoE (358 aa).

The 231-residue stretch at 4–234 folds into the ABC transporter domain; it reads VSLRKLDKSY…PESVFVGGFV (231 aa). 36 to 43 contacts ATP; it reads GPSGCGKS.

It belongs to the ABC transporter superfamily. The complex is probably composed of two ATP-binding proteins (SmoE), two transmembrane proteins (SmoG and SmoH) and a solute-binding protein (SmoF).

It localises to the cell inner membrane. Functionally, part of the ABC transporter complex SmoEFGH involved in sulfoquinovosyl glycerol (SQGro) uptake. Responsible for energy coupling to the transport system. This Agrobacterium fabrum (strain C58 / ATCC 33970) (Agrobacterium tumefaciens (strain C58)) protein is Sulfoquinovosyl glycerol transport ATP-binding protein SmoE.